Consider the following 381-residue polypeptide: Creatine kinase B-type (381 aa).

Ser-4 carries the phosphoserine modification. The Phosphagen kinase N-terminal domain occupies Lys-11 to Gly-98. Thr-35 bears the Phosphothreonine mark. A Glycyl lysine isopeptide (Lys-Gly) (interchain with G-Cter in ubiquitin) cross-link involves residue Lys-45. Val-72 is a binding site for creatine. Residues Arg-96–Leu-110 show a composition bias toward basic and acidic residues. Positions Arg-96–Asp-122 are disordered. Residue Lys-107 forms a Glycyl lysine isopeptide (Lys-Gly) (interchain with G-Cter in ubiquitin) linkage. Tyr-125 carries the post-translational modification Phosphotyrosine. The region spanning Tyr-125–Leu-367 is the Phosphagen kinase C-terminal domain. ATP contacts are provided by residues Ser-128 to Arg-132, Arg-130, Arg-132, and His-191. Residues Arg-130–Arg-138 form an internal MTS-like signal region. Ser-199 carries the phosphoserine modification. Position 232 (Glu-232) interacts with creatine. Residue Arg-236 coordinates ATP. The residue at position 269 (Tyr-269) is a 3'-nitrotyrosine. Ser-285 is a creatine binding site. Arg-292 is a binding site for ATP. A Phosphoserine modification is found at Ser-309. Residues Arg-320, Arg-320–Val-325, and Asp-335 each bind ATP. Thr-322 is modified (phosphothreonine). A Glycyl lysine isopeptide (Lys-Gly) (interchain with G-Cter in ubiquitin) cross-link involves residue Lys-381.

This sequence belongs to the ATP:guanido phosphotransferase family. In terms of assembly, dimer of identical or non-identical chains, which can be either B (brain type) or M (muscle type). With MM being the major form in skeletal muscle and myocardium, MB existing in myocardium, and BB existing in many tissues, especially brain. Interacts with SLC12A6 (via C-terminus); the interaction may be required for SLC12A6 potassium-chloride cotransport activity. Ubiquitinated by the ECS(ASB9) complex, leading to its degradation by the proteasome. In terms of tissue distribution, in the kidney localized primarily in the outer medulla in the thick ascending limb and distal convoluted tubule.

The protein localises to the cytoplasm. It is found in the cytosol. Its subcellular location is the mitochondrion. The protein resides in the cell membrane. The enzyme catalyses creatine + ATP = N-phosphocreatine + ADP + H(+). Its function is as follows. Reversibly catalyzes the transfer of phosphate between ATP and various phosphogens (e.g. creatine phosphate). Creatine kinase isoenzymes play a central role in energy transduction in tissues with large, fluctuating energy demands, such as skeletal muscle, heart, brain and spermatozoa. Acts as a key regulator of adaptive thermogenesis as part of the futile creatine cycle: localizes to the mitochondria of thermogenic fat cells and acts by mediating phosphorylation of creatine to initiate a futile cycle of creatine phosphorylation and dephosphorylation. During the futile creatine cycle, creatine and N-phosphocreatine are in a futile cycle, which dissipates the high energy charge of N-phosphocreatine as heat without performing any mechanical or chemical work. The polypeptide is Creatine kinase B-type (Ckb) (Rattus norvegicus (Rat)).